The chain runs to 515 residues: Maturase K (515 aa).

The protein belongs to the intron maturase 2 family. MatK subfamily.

It localises to the plastid. The protein resides in the chloroplast. Functionally, usually encoded in the trnK tRNA gene intron. Probably assists in splicing its own and other chloroplast group II introns. The chain is Maturase K from Pinus koraiensis (Korean pine).